Reading from the N-terminus, the 220-residue chain is MTKILIVEDEQNLARFIELELEHENYDVDIEYDGKPGLEKALSNTYDLILLDLMLPNINGLEICRQIRQNQTTPIIIITAKSDTYDKVAGLDYGADDYIVKPFDIEELLARIRAMLRRQPQKNLIDIKGIIIDKDAFKVTVDGQPLDLTKTEYDLLFLLVENRNHVLQREQIITDVWGYDTEVETNVVDVYIRYLRNKLKPFGKDKCIETVRGVGYVVRQ.

The Response regulatory domain occupies 3-116 (KILIVEDEQN…ELLARIRAML (114 aa)). D52 carries the 4-aspartylphosphate modification. Positions 122–220 (KNLIDIKGII…VRGVGYVVRQ (99 aa)) form a DNA-binding region, ompR/PhoB-type.

Post-translationally, phosphorylated by ArlS.

It localises to the cytoplasm. Functionally, member of the two-component regulatory system ArlS/ArlR. The protein is Response regulator ArlR (arlR) of Staphylococcus saprophyticus subsp. saprophyticus (strain ATCC 15305 / DSM 20229 / NCIMB 8711 / NCTC 7292 / S-41).